Reading from the N-terminus, the 205-residue chain is Thymidylate kinase (205 aa).

Position 13-20 (13-20 (GIDGSGKS)) interacts with ATP.

The protein belongs to the thymidylate kinase family.

It catalyses the reaction dTMP + ATP = dTDP + ADP. Phosphorylation of dTMP to form dTDP in both de novo and salvage pathways of dTTP synthesis. The polypeptide is Thymidylate kinase (Leptospira borgpetersenii serovar Hardjo-bovis (strain L550)).